The following is an 80-amino-acid chain: Exodeoxyribonuclease 7 small subunit (80 aa).

It belongs to the XseB family. As to quaternary structure, heterooligomer composed of large and small subunits.

It localises to the cytoplasm. It carries out the reaction Exonucleolytic cleavage in either 5'- to 3'- or 3'- to 5'-direction to yield nucleoside 5'-phosphates.. Bidirectionally degrades single-stranded DNA into large acid-insoluble oligonucleotides, which are then degraded further into small acid-soluble oligonucleotides. The chain is Exodeoxyribonuclease 7 small subunit from Rickettsia bellii (strain OSU 85-389).